Here is a 668-residue protein sequence, read N- to C-terminus: Ecdysone oxidase (668 aa).

FAD contacts are provided by residues 137–140 (NHMV), Val270, and 536–537 (WH). The Proton acceptor role is filled by His537.

The protein belongs to the GMC oxidoreductase family. The cofactor is FAD.

It carries out the reaction ecdysone + O2 = 3-dehydroecdysone + H2O2. Involved in the inactivation of ecdysteroid molting hormones by converting ecdysteroids into 3-dehydroecdysteroids. The polypeptide is Ecdysone oxidase (Bombyx mori (Silk moth)).